A 251-amino-acid chain; its full sequence is Ubiquinone/menaquinone biosynthesis C-methyltransferase UbiE (251 aa).

S-adenosyl-L-methionine contacts are provided by residues T74, D95, and 123–124 (NA).

It belongs to the class I-like SAM-binding methyltransferase superfamily. MenG/UbiE family.

It carries out the reaction a 2-demethylmenaquinol + S-adenosyl-L-methionine = a menaquinol + S-adenosyl-L-homocysteine + H(+). The catalysed reaction is a 2-methoxy-6-(all-trans-polyprenyl)benzene-1,4-diol + S-adenosyl-L-methionine = a 5-methoxy-2-methyl-3-(all-trans-polyprenyl)benzene-1,4-diol + S-adenosyl-L-homocysteine + H(+). It participates in quinol/quinone metabolism; menaquinone biosynthesis; menaquinol from 1,4-dihydroxy-2-naphthoate: step 2/2. The protein operates within cofactor biosynthesis; ubiquinone biosynthesis. Functionally, methyltransferase required for the conversion of demethylmenaquinol (DMKH2) to menaquinol (MKH2) and the conversion of 2-polyprenyl-6-methoxy-1,4-benzoquinol (DDMQH2) to 2-polyprenyl-3-methyl-6-methoxy-1,4-benzoquinol (DMQH2). This Shewanella frigidimarina (strain NCIMB 400) protein is Ubiquinone/menaquinone biosynthesis C-methyltransferase UbiE.